Reading from the N-terminus, the 151-residue chain is Large ribosomal subunit protein bL9 (151 aa).

This sequence belongs to the bacterial ribosomal protein bL9 family.

In terms of biological role, binds to the 23S rRNA. This chain is Large ribosomal subunit protein bL9, found in Pelodictyon phaeoclathratiforme (strain DSM 5477 / BU-1).